The following is a 248-amino-acid chain: Delayed minus-nitrogen induction protein 2 (248 aa).

4 helical membrane passes run 26 to 46, 110 to 130, 144 to 164, and 186 to 206; these read IFSN…CCSC, VHPV…VLTI, ISCL…MALA, and GVAA…FSLI.

It belongs to the SUR7 family.

It is found in the membrane. This Schizosaccharomyces pombe (strain 972 / ATCC 24843) (Fission yeast) protein is Delayed minus-nitrogen induction protein 2 (dni2).